Here is a 1164-residue protein sequence, read N- to C-terminus: DNA-directed RNA polymerase subunit beta (1164 aa).

2 disordered regions span residues 975 to 994 (RSSLPNRDGERQVDDFGKSN) and 1143 to 1164 (ANAALGINLSRDERPDADMDVS). 2 stretches are compositionally biased toward basic and acidic residues: residues 981 to 991 (RDGERQVDDFG) and 1152 to 1164 (SRDERPDADMDVS).

The protein belongs to the RNA polymerase beta chain family. As to quaternary structure, the RNAP catalytic core consists of 2 alpha, 1 beta, 1 beta' and 1 omega subunit. When a sigma factor is associated with the core the holoenzyme is formed, which can initiate transcription.

The catalysed reaction is RNA(n) + a ribonucleoside 5'-triphosphate = RNA(n+1) + diphosphate. Functionally, DNA-dependent RNA polymerase catalyzes the transcription of DNA into RNA using the four ribonucleoside triphosphates as substrates. This is DNA-directed RNA polymerase subunit beta from Corynebacterium jeikeium (strain K411).